A 258-amino-acid chain; its full sequence is MERLSAAPVKGQTGPERPSPFSQLVYTNNDSYVIHHGDLRKIHKAASRGQAWKLERMMKKTTMDLNIRDAKKRTALYWACANGHAEVVTLLVDRKCQLDVLDGENRTILMKALQCQREACANILIDSGADPNIVDVYGNTAVHYAVNSENLSVVAKLLSCGADIEVKNKAGHTPLLLAIRKRSEEIVEFLLTKNANANAVDKFKCVHQQLLEYKQKISKNSQNSNPEGTSEGTPDEAAPLAERTPDTAESLVERTPDE.

The disordered stretch occupies residues 1–21; sequence MERLSAAPVKGQTGPERPSPF. ANK repeat units lie at residues 71–100, 104–133, 137–166, and 170–199; these read KKRTALYWACANGHAEVVTLLVDRKCQLDV, ENRTILMKALQCQREACANILIDSGADPNI, YGNTAVHYAVNSENLSVVAKLLSCGADIEV, and AGHTPLLLAIRKRSEEIVEFLLTKNANANA. Residues 216–258 form a disordered region; sequence KISKNSQNSNPEGTSEGTPDEAAPLAERTPDTAESLVERTPDE. Over residues 218-232 the composition is skewed to polar residues; it reads SKNSQNSNPEGTSEG. A compositionally biased stretch (basic and acidic residues) spans 243 to 258; sequence RTPDTAESLVERTPDE.

The chain is Putative ankyrin repeat domain-containing protein 30B-like (ANKRD30BL) from Homo sapiens (Human).